The sequence spans 602 residues: Potassium voltage-gated channel subfamily A member 5 (602 aa).

Residues 1 to 202 are tetramerization domain; sequence MEISLVPLEN…FYQLGDEAME (202 aa). The Cytoplasmic segment spans residues 1 to 238; the sequence is MEISLVPLEN…LIFEYPESSG (238 aa). Residues 58 to 107 are disordered; it reads EDANQGGRPLPPMAQELPQPRRLSAEDEEGEGDPGLGTVEEDQAPQDAGS. S81 bears the Phosphoserine; by CK2 and PKA mark. A Glycyl lysine isopeptide (Lys-Gly) (interchain with G-Cter in SUMO) cross-link involves residue K212. The chain crosses the membrane as a helical span at residues 239–260; the sequence is SARAIAIVSVLVILISIITFCL. The Extracellular portion of the chain corresponds to 261–314; the sequence is ETLPEFRDERELLRHPPVPPQPPAPAPGINGSVSGALSSGPTVAPLLPRTLADP. Residues 315–336 traverse the membrane as a helical segment; sequence FFIVETTCVIWFTFELLVRFFA. C337 carries S-palmitoyl cysteine lipidation. Residues 337-347 lie on the Cytoplasmic side of the membrane; it reads CPSKAEFSRNI. A helical membrane pass occupies residues 348 to 368; the sequence is MNIIDVVAIFPYFITLGTELA. At 369–384 the chain is on the extracellular side; it reads EQQPGGGGQNGQQAMS. Residues 385-405 form a helical; Voltage-sensor membrane-spanning segment; sequence LAILRVIRLVRVFRIFKLSRH. Topologically, residues 406–420 are cytoplasmic; sequence SKGLQILGKTLQASM. The tract at residues 407–420 is S4-S5 linker; it reads KGLQILGKTLQASM. A helical membrane pass occupies residues 421–442; the sequence is RELGLLIFFLFIGVILFSSAVY. Over 443–456 the chain is Extracellular; that stretch reads FAEADNHGSHFSSI. The segment at residues 457–468 is an intramembrane region (helical); that stretch reads PDAFWWAVVTMT. The short motif at 469–474 is the Selectivity filter element; sequence TVGYGD. An intramembrane segment occupies 469-476; sequence TVGYGDMR. The Extracellular portion of the chain corresponds to 477-483; sequence PITVGGK. A helical transmembrane segment spans residues 484 to 512; it reads IVGSLCAIAGVLTIALPVPVIVSNFNYFY. Residues 513–602 lie on the Cytoplasmic side of the membrane; sequence HRETDHEEQA…CLDTSRETDL (90 aa). Positions 523–536 are enriched in basic and acidic residues; the sequence is ALKEEQGNQRRESG. The segment at 523 to 543 is disordered; sequence ALKEEQGNQRRESGLDTGGQR. A Glycyl lysine isopeptide (Lys-Gly) (interchain with G-Cter in SUMO) cross-link involves residue K525. Residues S535, S546, and S569 each carry the phosphoserine; by PKA modification. Residues 600–602 carry the PDZ-binding motif; that stretch reads TDL.

It belongs to the potassium channel family. A (Shaker) (TC 1.A.1.2) subfamily. Kv1.5/KCNA5 sub-subfamily. As to quaternary structure, homotetramer and heterotetramer of potassium channel proteins. Interacts with DLG1, which enhances channel currents. Forms a ternary complex with DLG1 and CAV3. Interacts with KCNAB1. Interacts with UBE2I. Interacts with XIRP2; the interaction is required for normal action potential configuration in the heart. Post-translationally, glycosylated. In terms of processing, sumoylated on Lys-212, and Lys-525, preferentially with SUMO3. Sumoylation regulates the voltage sensitivity of the channel. Expressed equally in atrium, ventricle, aorta and skeletal muscle. Weaker expression in brain.

The protein resides in the cell membrane. The enzyme catalyses K(+)(in) = K(+)(out). In terms of biological role, voltage-gated potassium channel that mediates transmembrane potassium transport in excitable membranes. Forms tetrameric potassium-selective channels through which potassium ions pass in accordance with their electrochemical gradient. The channel alternates between opened and closed conformations in response to the voltage difference across the membrane. Can form functional homotetrameric channels and heterotetrameric channels that contain variable proportions of KCNA1, KCNA2, KCNA4, KCNA5, and possibly other family members as well; channel properties depend on the type of alpha subunits that are part of the channel. Channel properties are modulated by cytoplasmic beta subunits that regulate the subcellular location of the alpha subunits and promote rapid inactivation. Homotetrameric channels display rapid activation and slow inactivation. Required for normal electrical conduction including formation of the infranodal ventricular conduction system and normal action potential configuration, as a result of its interaction with XIRP2. May play a role in regulating the secretion of insulin in normal pancreatic islets. The sequence is that of Potassium voltage-gated channel subfamily A member 5 (Kcna5) from Rattus norvegicus (Rat).